A 495-amino-acid polypeptide reads, in one-letter code: Aspartyl/glutamyl-tRNA(Asn/Gln) amidotransferase subunit B (495 aa).

This sequence belongs to the GatB/GatE family. GatB subfamily. In terms of assembly, heterotrimer of A, B and C subunits.

It carries out the reaction L-glutamyl-tRNA(Gln) + L-glutamine + ATP + H2O = L-glutaminyl-tRNA(Gln) + L-glutamate + ADP + phosphate + H(+). The enzyme catalyses L-aspartyl-tRNA(Asn) + L-glutamine + ATP + H2O = L-asparaginyl-tRNA(Asn) + L-glutamate + ADP + phosphate + 2 H(+). Allows the formation of correctly charged Asn-tRNA(Asn) or Gln-tRNA(Gln) through the transamidation of misacylated Asp-tRNA(Asn) or Glu-tRNA(Gln) in organisms which lack either or both of asparaginyl-tRNA or glutaminyl-tRNA synthetases. The reaction takes place in the presence of glutamine and ATP through an activated phospho-Asp-tRNA(Asn) or phospho-Glu-tRNA(Gln). This is Aspartyl/glutamyl-tRNA(Asn/Gln) amidotransferase subunit B from Methanosarcina barkeri (strain Fusaro / DSM 804).